The chain runs to 141 residues: ATP synthase epsilon chain (141 aa).

Belongs to the ATPase epsilon chain family. F-type ATPases have 2 components, CF(1) - the catalytic core - and CF(0) - the membrane proton channel. CF(1) has five subunits: alpha(3), beta(3), gamma(1), delta(1), epsilon(1). CF(0) has three main subunits: a, b and c.

It is found in the cell membrane. Its function is as follows. Produces ATP from ADP in the presence of a proton gradient across the membrane. This is ATP synthase epsilon chain from Natranaerobius thermophilus (strain ATCC BAA-1301 / DSM 18059 / JW/NM-WN-LF).